The chain runs to 431 residues: Adenylosuccinate synthetase (431 aa).

GTP is bound by residues 13–19 and 41–43; these read GDEGKGK and GHT. The Proton acceptor role is filled by Asp14. Asp14 and Gly41 together coordinate Mg(2+). Residues 14–17, 39–42, Thr130, Arg144, Gln225, Thr240, and Arg306 each bind IMP; these read DEGK and NAGH. The active-site Proton donor is His42. 302–308 serves as a coordination point for substrate; the sequence is ATTGRQR. Residues Arg308, 334 to 336, and 416 to 418 contribute to the GTP site; these read KLD and STG.

The protein belongs to the adenylosuccinate synthetase family. In terms of assembly, homodimer. The cofactor is Mg(2+).

It is found in the cytoplasm. The catalysed reaction is IMP + L-aspartate + GTP = N(6)-(1,2-dicarboxyethyl)-AMP + GDP + phosphate + 2 H(+). It participates in purine metabolism; AMP biosynthesis via de novo pathway; AMP from IMP: step 1/2. Functionally, plays an important role in the de novo pathway of purine nucleotide biosynthesis. Catalyzes the first committed step in the biosynthesis of AMP from IMP. This chain is Adenylosuccinate synthetase, found in Halorhodospira halophila (strain DSM 244 / SL1) (Ectothiorhodospira halophila (strain DSM 244 / SL1)).